We begin with the raw amino-acid sequence, 512 residues long: Cytochrome P450 monooxygenase ABA1 (512 aa).

A helical transmembrane segment spans residues 13-32 (HWLSGILAIATVYLATSYII). A heme-binding site is contributed by C458.

This sequence belongs to the cytochrome P450 family. Heme serves as cofactor.

Its subcellular location is the membrane. It participates in hormone biosynthesis. Functionally, cytochrome P450 monooxygenase involved in the biosynthesis of abscisic acid (ABA), a phytohormone that acts antagonistically toward salicylic acid (SA), jasmonic acid (JA) and ethylene (ETH) signaling, to impede plant defense responses. During pathogen-host interaction, ABA plays a dual role in disease severity by increasing plant susceptibility and accelerating pathogenesis in the fungus itself. The first step of the pathway catalyzes the reaction from farnesyl diphosphate to alpha-ionylideneethane performed by the alpha-ionylideneethane synthase ABA3 via a three-step reaction mechanism involving 2 neutral intermediates, beta-farnesene and allofarnesene. The cytochrome P450 monooxygenase ABA1 might then be involved in the conversion of alpha-ionylideneethane to alpha-ionylideneacetic acid. Alpha-ionylideneacetic acid is further converted to abscisic acid in 2 steps involving the cytochrome P450 monooxygenase ABA2 and the short-chain dehydrogenase/reductase ABA4, via the intermediates 1'-deoxy-ABA or 1',4'-trans-diol-ABA, depending on the order of action of these 2 enzymes. ABA2 is responsible for the hydroxylation of carbon atom C-1' and ABA4 might be involved in the oxidation of the C-4' carbon atom. This chain is Cytochrome P450 monooxygenase ABA1, found in Pyricularia oryzae (strain Y34) (Rice blast fungus).